A 950-amino-acid chain; its full sequence is Protocadherin alpha-6 (950 aa).

The signal sequence occupies residues 1–29; it reads MVFTPEDRLGKQCLLLPLLLLAAWKVGSG. The Extracellular portion of the chain corresponds to 30–697; it reads QLHYSVPEEA…GPEAALVDVN (668 aa). Cadherin domains lie at 34–133, 157–242, 243–350, 351–455, 456–565, and 581–678; these read SVPE…PPLF, ASDA…APNF, EQSE…VPEI, ALTS…APAF, AQPE…APAL, and VPRS…APKA. N-linked (GlcNAc...) asparagine glycans are attached at residues N257, N265, N386, and N548. The chain crosses the membrane as a helical span at residues 698–718; the sequence is VYLIIAICAVSSLLVLTLLLY. Residues 719–950 are Cytoplasmic-facing; it reads TALRCSAPST…GNSTTDNSDQ (232 aa). PXXP repeat units follow at residues 799–802, 832–835, 873–876, and 891–894; these read PRQP, PGGP, PGNP, and PGSP. Residues 799–894 are 4 X 4 AA repeats of P-X-X-P; the sequence is PRQPNPDWRY…PDKFIIPGSP (96 aa). The disordered stretch occupies residues 830–889; it reads AGPGGPDQQWPTVSSATPEPEAGEVSPPVGAGVNSNSWTFKYGPGNPKQSGPGELPDKFI. The interval 901 to 950 is disordered; sequence QEPANSQIDKSDFITFGKKEETKKKKKKKKGNKTQEKKEKGNSTTDNSDQ. A compositionally biased stretch (basic and acidic residues) spans 909 to 923; it reads DKSDFITFGKKEETK.

The protein localises to the cell membrane. In terms of biological role, potential calcium-dependent cell-adhesion protein. May be involved in the establishment and maintenance of specific neuronal connections in the brain. The polypeptide is Protocadherin alpha-6 (PCDHA6) (Pan troglodytes (Chimpanzee)).